A 661-amino-acid polypeptide reads, in one-letter code: uncharacterized protein (661 aa).

The next 7 membrane-spanning stretches (helical) occupy residues 37 to 57 (VFLG…LFLS), 87 to 107 (INSP…AVFI), 120 to 140 (WLLL…NVIL), 158 to 178 (VFWQ…PIIV), 243 to 263 (LLDI…LYTI), 266 to 286 (TLMW…IAIG), and 341 to 361 (FNLL…YNYF). Positions 123–410 (LGVLLSLLFV…VTNQIQNITE (288 aa)) constitute an ABC transmembrane type-1 domain. An ABC transporter domain is found at 453–659 (VALENVTLSP…AEGRWQISPI (207 aa)). Position 487–494 (487–494 (GPSGSGKS)) interacts with ATP.

This sequence belongs to the ABC transporter superfamily.

Its subcellular location is the cell inner membrane. This is an uncharacterized protein from Synechocystis sp. (strain ATCC 27184 / PCC 6803 / Kazusa).